A 448-amino-acid polypeptide reads, in one-letter code: Glutamyl-tRNA reductase (448 aa).

Residues 49–52 (TCNR), S109, 114–116 (ETQ), and Q120 each bind substrate. The active-site Nucleophile is C50. Position 189–194 (189–194 (GAGETG)) interacts with NADP(+). A disordered region spans residues 427–448 (PVDEVEETDATSAKAPLRALMR).

It belongs to the glutamyl-tRNA reductase family. In terms of assembly, homodimer.

It carries out the reaction (S)-4-amino-5-oxopentanoate + tRNA(Glu) + NADP(+) = L-glutamyl-tRNA(Glu) + NADPH + H(+). It functions in the pathway porphyrin-containing compound metabolism; protoporphyrin-IX biosynthesis; 5-aminolevulinate from L-glutamyl-tRNA(Glu): step 1/2. Its function is as follows. Catalyzes the NADPH-dependent reduction of glutamyl-tRNA(Glu) to glutamate 1-semialdehyde (GSA). The polypeptide is Glutamyl-tRNA reductase (Exiguobacterium sp. (strain ATCC BAA-1283 / AT1b)).